Reading from the N-terminus, the 113-residue chain is UPF0482 protein YnfB (113 aa).

The signal sequence occupies residues 1–28; the sequence is MKITLSKRIGLLAILLPCALALSTTVHA.

Belongs to the UPF0482 family.

This is UPF0482 protein YnfB from Escherichia coli O8 (strain IAI1).